The chain runs to 79 residues: Cytochrome c oxidase subunit 7A1, mitochondrial (79 aa).

A mitochondrion-targeting transit peptide spans 1-21 (MQALRVSQALIRSFSSTARNR). Topologically, residues 22–46 (FQNRVREKQKLFQEDNDIPLYLKGG) are mitochondrial matrix. Residues 47–75 (IVDNILYRVTMTLCLGGTVYSLYSLGWAS) form a helical membrane-spanning segment. Topologically, residues 76 to 79 (FPRN) are mitochondrial intermembrane.

Belongs to the cytochrome c oxidase VIIa family. Component of the complex IV (CIV, cytochrome c oxidase), a multisubunit enzyme composed of 14 subunits. The complex is composed of a catalytic core of 3 subunits MT-CO1, MT-CO2 and MT-CO3, encoded in the mitochondrial DNA, and 11 supernumerary subunits COX4I1 (or COX4I2), COX5A, COX5B, COX6A2 (or COX6A1), COX6B1 (or COX6B2), COX6C, COX7A1 (or COX7A2), COX7B, COX7C, COX8B and NDUFA4, which are encoded in the nuclear genome. The complex exists as a monomer or a dimer and forms supercomplexes (SCs) in the inner mitochondrial membrane with NADH-ubiquinone oxidoreductase (complex I, CI) and ubiquinol-cytochrome c oxidoreductase (cytochrome b-c1 complex, complex III, CIII), resulting in different assemblies (supercomplex SCI(1)III(2)IV(1) and megacomplex MCI(2)III(2)IV(2)).

The protein resides in the mitochondrion inner membrane. Its pathway is energy metabolism; oxidative phosphorylation. Component of the mitochondrial respiratory complex IV (CIV, also named cytochrome c oxidase complex), the last enzyme in the mitochondrial electron transport chain which drives oxidative phosphorylation. The CIV complex is the component of the respiratory chain that catalyzes the reduction of oxygen to water. Acts as an assembly factor that specifically drives the homodimerization of CIV complexes, mediating the formation of mitochondrial respiratory supercomplexes (respirasomes) containing two CIV: supercomplxes with two molecules of CIV show improved activity. Despite being highly expressed in brown adipose tissue, not required for thermogenesis. The polypeptide is Cytochrome c oxidase subunit 7A1, mitochondrial (COX7A1) (Homo sapiens (Human)).